Consider the following 591-residue polypeptide: Lysyl oxidase homolog 1 (591 aa).

The first 22 residues, 1–22 (MALALTGWQLVWGACVCVLVHG), serve as a signal peptide directing secretion. The propeptide occupies 23–91 (QQAPPGQGSD…PRRRGGLRRR (69 aa)). Disordered stretches follow at residues 77–107 (APQAPPRRRGGLRRRQAPSLPLPGRVGSDTV) and 233–373 (EYGG…RLSV). Positions 82 to 92 (PRRRGGLRRRQ) are enriched in basic residues. The segment covering 298–313 (NGGGGGGTYGGGGGDP) has biased composition (gly residues). Residues 319–386 (PPYGNMPPEA…YRPNQNGRGL (68 aa)) are interaction with FBLN5. The segment at 387-591 (PDLVPDPNYV…STTNCKIVQS (205 aa)) is lysyl-oxidase like. 5 disulfide bridges follow: cysteine 412–cysteine 418, cysteine 465–cysteine 514, cysteine 498–cysteine 504, cysteine 525–cysteine 535, and cysteine 572–cysteine 586. Histidine 466, histidine 468, and histidine 470 together coordinate Cu cation. Residues 494 to 529 (KASFCLEDSTCDFGNLKRYACTSHTQGLSPGCYDTY) constitute a cross-link (lysine tyrosylquinone (Lys-Tyr)). Tyrosine 529 carries the 2',4',5'-topaquinone modification.

It belongs to the lysyl oxidase family. As to quaternary structure, interacts (via propeptide) with EFEMP2. Interacts with FBLN5. The cofactor is Cu cation. It depends on lysine tyrosylquinone residue as a cofactor. Post-translationally, the lysine tyrosylquinone cross-link (LTQ) is generated by condensation of the epsilon-amino group of a lysine with a topaquinone produced by oxidation of tyrosine. Proteolytic processing by a furin-like protease causes removal of N-terminal propeptide resulting in an enzyme largely inactive, but further proteolytic processing by BMP1 results in enzyme activation.

The protein resides in the secreted. The protein localises to the extracellular space. It localises to the extracellular matrix. It carries out the reaction L-lysyl-[protein] + O2 + H2O = (S)-2-amino-6-oxohexanoyl-[protein] + H2O2 + NH4(+). Its function is as follows. Catalyzes the oxidative deamination of lysine and hydroxylysine residues in collagen and elastin, resulting in the formation of covalent cross-linkages, and the stabilization of collagen and elastin fibers. Essential for the elastic fiber homeostasis and for their maintenance at adult age. The polypeptide is Lysyl oxidase homolog 1 (LOXL1) (Bos taurus (Bovine)).